The primary structure comprises 300 residues: Protein Bel-1 (300 aa).

Positions 1–50 (MDSYEKEESVASTSGIQDLQTLSELVGPENAGEGELTIAEEPEENPRRPR) are disordered. Residues 10–23 (VASTSGIQDLQTLS) show a composition bias toward polar residues. Residues 89 to 200 (SKSLCKRLIL…SEGPKPRPRH (112 aa)) mediate DNA binding. Residues 209–244 (FEKHHKPRQKRPRRRSIDNESCASSSDTMANEPGSL) form a disordered region. Positions 211–222 (KHHKPRQKRPRR) are enriched in basic residues. The Nuclear localization signal motif lies at 214–223 (KPRQKRPRRR). Residues 224–300 (SIDNESCASS…PSGSGEHSVL (77 aa)) are transactivation domain. Positions 227–237 (NESCASSSDTM) are enriched in polar residues.

As to quaternary structure, homodimer or homomultimer. Forms complexes with the host nuclear factors NFIA, NFIB, NFIC or NFIX.

It is found in the host nucleus. Transcriptional transactivator that activates the viral internal promoter (IP), thereby enhancing its own expression. This transactivation is repressed by nuclear factor I. Also transactivates the long terminal repeat (LTR) promoter, thereby inducing structural gene expression, initiating the late phase of infection. It is therefore a key regulator of viral gene expression. It directly binds to and activates DNA target sites of viral promoters and those of distinct cellular genes. Required for viral replication. The protein is Protein Bel-1 (bel1) of Human spumaretrovirus (SFVcpz(hu)).